The sequence spans 138 residues: SPbeta prophage-derived uncharacterized protein YopJ (138 aa).

The chain is SPbeta prophage-derived uncharacterized protein YopJ (yopJ) from Bacillus subtilis (strain 168).